We begin with the raw amino-acid sequence, 291 residues long: Regulator of rDNA transcription protein 5 (291 aa).

The region spanning 21–104 is the RRM 1 domain; sequence KRIYISNLDF…RTLKIKMYVP (84 aa). The interval 109–151 is disordered; sequence ARAERRKEKRKVPAPQAEENPDAAPQDAQQPQPPAPAEEPTSK. The 84-residue stretch at 152–235 folds into the RRM 2 domain; it reads DTVYCAYLPS…KKITLRPARL (84 aa). Residues 271-291 are disordered; it reads HRQQEAEIPAAETPDDVAATA.

This sequence belongs to the RRT5 family.

Its function is as follows. May be involved in the modulation of rDNA transcription. This chain is Regulator of rDNA transcription protein 5 (RRT5), found in Lachancea thermotolerans (strain ATCC 56472 / CBS 6340 / NRRL Y-8284) (Yeast).